Here is a 144-residue protein sequence, read N- to C-terminus: Putative pre-16S rRNA nuclease (144 aa).

This sequence belongs to the YqgF nuclease family.

The protein localises to the cytoplasm. In terms of biological role, could be a nuclease involved in processing of the 5'-end of pre-16S rRNA. The polypeptide is Putative pre-16S rRNA nuclease (Wigglesworthia glossinidia brevipalpis).